The sequence spans 107 residues: Thiosulfate sulfurtransferase GlpE (107 aa).

The region spanning 19 to 107 (QDLNAVLVDI…WHKAGLPVEK (89 aa)) is the Rhodanese domain. C67 acts as the Cysteine persulfide intermediate in catalysis.

This sequence belongs to the GlpE family.

The protein resides in the cytoplasm. The enzyme catalyses thiosulfate + hydrogen cyanide = thiocyanate + sulfite + 2 H(+). The catalysed reaction is thiosulfate + [thioredoxin]-dithiol = [thioredoxin]-disulfide + hydrogen sulfide + sulfite + 2 H(+). In terms of biological role, transferase that catalyzes the transfer of sulfur from thiosulfate to thiophilic acceptors such as cyanide or dithiols. May function in a CysM-independent thiosulfate assimilation pathway by catalyzing the conversion of thiosulfate to sulfite, which can then be used for L-cysteine biosynthesis. This is Thiosulfate sulfurtransferase GlpE from Aliivibrio fischeri (strain MJ11) (Vibrio fischeri).